The sequence spans 2190 residues: Non-reducing polyketide synthase mapC' (2190 aa).

The tract at residues 14-268 (VLFGPQCPDI…HHEAHREGIQ (255 aa)) is N-terminal acylcarrier protein transacylase domain (SAT). In terms of domain architecture, Ketosynthase family 3 (KS3) spans 401-817 (ASPIAITGMA…GSNAALIVKE (417 aa)). Active-site for beta-ketoacyl synthase activity residues include Cys-566, His-701, and His-740. Positions 893–1190 (CFGGQNGLTA…NVTSALWAQG (298 aa)) are malonyl-CoA:ACP transacylase (MAT) domain. Ser-979 serves as the catalytic For acyl/malonyl transferase activity. Residues 1243–1375 (GQEAGLLCQL…GTVCLHQERS (133 aa)) form an N-terminal hotdog fold region. The PKS/mFAS DH domain maps to 1243-1552 (GQEAGLLCQL…FTSVSIRSLT (310 aa)). The product template (PT) domain stretch occupies residues 1251-1556 (QLSESPDERL…SIRSLTRALA (306 aa)). Catalysis depends on His-1277, which acts as the Proton acceptor; for dehydratase activity. Residues 1401–1552 (ASNGLKGSTV…FTSVSIRSLT (152 aa)) form a C-terminal hotdog fold region. The Proton donor; for dehydratase activity role is filled by Asp-1458. A Carrier domain is found at 1597–1671 (ANDLATVQEM…GLVEHIFPGH (75 aa)). Ser-1631 is subject to O-(pantetheine 4'-phosphoryl)serine. Positions 1840–2187 (ATMSPSKPIK…AEGYEFLRTH (348 aa)) are methyltransferase (CMeT) domain. Active-site for thioesterase activity residues include Ser-1969, Asp-2127, and His-2159.

It localises to the cytoplasm. Its subcellular location is the cytosol. It carries out the reaction 3 malonyl-CoA + acetyl-CoA + S-adenosyl-L-methionine + H(+) = 5-methylorsellinate + S-adenosyl-L-homocysteine + 3 CO2 + 4 CoA. It functions in the pathway secondary metabolite biosynthesis; terpenoid biosynthesis. Its function is as follows. Non-reducing polyketide synthase; part of the gene cluster that mediates the biosynthesis of mycophenolic acid (MPA), the first isolated antibiotic natural product in the world obtained from a culture of Penicillium brevicompactum in 1893. MpaC' catalyzes the synthesis of 5-methylorsellinic acid (5MOA) via the condensation of 1 acetyl-CoA starter unit with 3 malonyl-CoA units and one methylation step. The first step of the pathway is the synthesis of 5-methylorsellinic acid (5MOA) by the cytosolic polyketide synthase mpaC. 5MOA is then converted to the phthalide compound 5,7-dihydroxy-4,6-dimethylphthalide (DHMP) by the endoplasmic reticulum-bound cytochrome P450 monooxygenase mpaDE. MpaDE first catalyzes hydroxylation of 5-MOA to 4,6-dihydroxy-2-(hydroxymethyl)-3-methylbenzoic acid (DHMB). MpaDE then acts as a lactone synthase that catalyzes the ring closure to convert DHMB into DHMP. The next step is the prenylation of DHMP by the Golgi apparatus-associated prenyltransferase mpaA to yield farnesyl-DHMP (FDHMP). The ER-bound oxygenase mpaB then mediates the oxidative cleavage the C19-C20 double bond in FDHMP to yield FDHMP-3C via a mycophenolic aldehyde intermediate. The O-methyltransferase mpaG catalyzes the methylation of FDHMP-3C to yield MFDHMP-3C. After the cytosolic methylation of FDHMP-3C, MFDHMP-3C enters into peroxisomes probably via free diffusion due to its low molecular weight. Upon a peroxisomal CoA ligation reaction, catalyzed by a beta-oxidation component enzyme acyl-CoA ligase ACL891, MFDHMP-3C-CoA would then be restricted to peroxisomes for the following beta-oxidation pathway steps. The peroxisomal beta-oxidation machinery than converts MFDHMP-3C-CoA into MPA_CoA, via a beta-oxidation chain-shortening process. Finally mpaH acts as a peroxisomal acyl-CoA hydrolase with high substrate specificity toward MPA-CoA to release the final product MPA. The sequence is that of Non-reducing polyketide synthase mapC' from Penicillium brevicompactum.